The following is a 96-amino-acid chain: Small ribosomal subunit protein bS6 (96 aa).

The protein belongs to the bacterial ribosomal protein bS6 family.

In terms of biological role, binds together with bS18 to 16S ribosomal RNA. The chain is Small ribosomal subunit protein bS6 from Salinispora tropica (strain ATCC BAA-916 / DSM 44818 / JCM 13857 / NBRC 105044 / CNB-440).